Consider the following 1171-residue polypeptide: MHIKEICLEGFKSYATRTVVPGFDPHFNAITGLNGSGKSNILDSICFVLGITNLQQVRAANLQELVYKQGQAGITRATVSVTFDNSERNRSPLGHEDHSEITVTRQIVVGGKNKYLINGKLAQPNQVQNLFHSVQLNVNNPHFLIMQGRITKVLNMKPMEILSMLEEAAGTRMYENKKEAALKTLEKKQTKVDEINKLLEKDILPALEKLRREKSQYMQWANGNAELDRLKRFCVAFEYVQAEKIRDNSIHVVEEMKIKMTGIDEQTDKTQGEISELEKQIKALTQAREASMGGEVKALSDKVDSLSNEVTRELSKLTNMEDTLQGEEKNAEKMVHNIEDLKKSVEERASALNKCDEGAAELKQKFQEFSTTLEECEREHQGILAGKSSGDEEKCLEDQLRDAKISVGTAETELKQLNTKISHCEKELKEKKSQLMSKQDEAVAVENELDARKNDVESVKRAFDSLPYKEGQMEALEKDRESELEIGHRLKDKVHELSAQLANVQFTYRDPVKNFDRSKVKGVVAKLIKVNDRSSMTALEVTAGGKLFNVIVDTEDTGKQLLQKGDLRRRVTIIPLNKIQSHLVPPRVQQATVGKGNAELALSLVGYSEELKNAMEYVFGSTFVCKTTDAAKEVAFNREIRTPSVTLEGDVFQPSGLLTGGSRKGGGDLLRQLHDLAEAETKFRAHQKSLSEIEANIKELQPLQTKFTDMKAQLELKMYDMSLFLKRAEQNEHHKLGDAVKKLEEEVEEMRSQIKEKEGLYKSCADTVSTLEKSIKDHDKNREGRLKDLEKNIKTLKARIQASSKDLKGHENVRERLVMEQEAVTQEQSYLKSQLTSLRTQISTLASDVGNQRAKVDAIQKDHDQSLSELKLIHAKMKECDTQISGSIAEQEKCLQKISDMKLDRKKLENEVTRMEMEHKNCSVKVDKLVEKHTWITSEKRLFGNGGTDYDFESRDPHKAREELERLQTDQSSLEKRVNKKVTAMFEKAEDEYNALMTKKNIIETDKSKIKKVIEELDEKKKETLKVTWVKVNQDFGSIFSTLLPGTMSKLEPPEGGTFLDGLEVRVAFGDVWKQSLSELSGGQRSLLALSLILALLLFKPAPIYILDEVDAALDLSHTQNIGRMIKSHFPHSQFIVVSLKEGMFSNADVLFRTKFVDGVSTVQRTVTKQS.

Residues 2–1158 enclose the Zinc-hook domain; that stretch reads HIKEICLEGF…DVLFRTKFVD (1157 aa). 32-39 provides a ligand contact to ATP; sequence GLNGSGKS. The stretch at 172-510 forms a coiled coil; it reads RMYENKKEAA…LANVQFTYRD (339 aa). The region spanning 518-635 is the SMC hinge domain; sequence SKVKGVVAKL…KTTDAAKEVA (118 aa). Positions 674-1026 form a coiled coil; the sequence is HDLAEAETKF…LDEKKKETLK (353 aa).

It belongs to the SMC family. SMC2 subfamily. In terms of assembly, forms a heterodimer with SMC4. Component of the condensin complex, which contains the SMC2 and SMC4 heterodimer, and three non SMC subunits that probably regulate the complex: CAPH, CAPD2 and CAPG. As to expression, highly expressed in roots and young floral buds.

Its subcellular location is the nucleus. Functionally, central component of the condensin complex, a complex required for conversion of interphase chromatin into mitotic-like condense chromosomes. The condensin complex probably introduces positive supercoils into relaxed DNA in the presence of type I topoisomerases and converts nicked DNA into positive knotted forms in the presence of type II topoisomerases. Also involved in chromosome segregation in meiosis. In Arabidopsis thaliana (Mouse-ear cress), this protein is Structural maintenance of chromosomes protein 2-2 (SMC2-2).